Consider the following 270-residue polypeptide: Thiazole synthase (270 aa).

Lys-111 functions as the Schiff-base intermediate with DXP in the catalytic mechanism. 1-deoxy-D-xylulose 5-phosphate is bound by residues Gly-172, 198–199 (AG), and 220–221 (NT).

The protein belongs to the ThiG family. In terms of assembly, homotetramer. Forms heterodimers with either ThiH or ThiS.

It localises to the cytoplasm. It carries out the reaction [ThiS sulfur-carrier protein]-C-terminal-Gly-aminoethanethioate + 2-iminoacetate + 1-deoxy-D-xylulose 5-phosphate = [ThiS sulfur-carrier protein]-C-terminal Gly-Gly + 2-[(2R,5Z)-2-carboxy-4-methylthiazol-5(2H)-ylidene]ethyl phosphate + 2 H2O + H(+). It participates in cofactor biosynthesis; thiamine diphosphate biosynthesis. Its function is as follows. Catalyzes the rearrangement of 1-deoxy-D-xylulose 5-phosphate (DXP) to produce the thiazole phosphate moiety of thiamine. Sulfur is provided by the thiocarboxylate moiety of the carrier protein ThiS. In vitro, sulfur can be provided by H(2)S. The protein is Thiazole synthase of Methylococcus capsulatus (strain ATCC 33009 / NCIMB 11132 / Bath).